The sequence spans 347 residues: MHSSSSLIKLGFLLLLLNVSLSHAQLSPSFYDKTCPQVFDIATNTIKTALRSDPRIAASILRLHFHDCFVNGCDASILLDNTTSFRTEKDAFGNARSARGFDVIDTMKAAVEKACPKTVSCADLLAIAAQKSVVLAGGPSWKVPSGRRDSLRGFMDLANDNLPGPSSTLQVLKDKFRNVGLDRPSDLVALSGGHTFGKNQCQFIMDRLYNFSNSGKPDPTLDKSYLSTLRKQCPRNGNLSVLVDFDLRTPTIFDNKYYVNLKENKGLIQSDQELFSSPDASDTIPLVRAYADGQGKFFDAFVEAMIRMGNLSPSTGKQGEIRLNCRVVNSKPKIMDVVDTNDFASSI.

A signal peptide spans 1-24; it reads MHSSSSLIKLGFLLLLLNVSLSHA. Disulfide bonds link Cys35–Cys115, Cys68–Cys73, Cys121–Cys325, and Cys201–Cys233. His66 serves as the catalytic Proton acceptor. Ca(2+) is bound by residues Asp67, Val70, Gly72, Asp74, and Ser76. Residue Asn81 is glycosylated (N-linked (GlcNAc...) asparagine). Position 163 (Pro163) interacts with substrate. Residue His194 participates in heme b binding. Thr195 is a Ca(2+) binding site. 2 N-linked (GlcNAc...) asparagine glycosylation sites follow: Asn210 and Asn238. Positions 246, 249, and 254 each coordinate Ca(2+).

This sequence belongs to the peroxidase family. Classical plant (class III) peroxidase subfamily. Requires Ca(2+) as cofactor. Heme b is required as a cofactor.

The protein localises to the secreted. Its subcellular location is the vacuole. It carries out the reaction 2 a phenolic donor + H2O2 = 2 a phenolic radical donor + 2 H2O. Its function is as follows. Removal of H(2)O(2), oxidation of toxic reductants, biosynthesis and degradation of lignin, suberization, auxin catabolism, response to environmental stresses such as wounding, pathogen attack and oxidative stress. These functions might be dependent on each isozyme/isoform in each plant tissue. In Armoracia rusticana (Horseradish), this protein is Peroxidase C2 (PRXC2).